The chain runs to 732 residues: Coagulation factor XIII A chain (732 aa).

Positions 1–27 (MSETSRTAFGGRRAVPPNNSNAAEDDL) are disordered. N-acetylserine is present on Ser2. The propeptide at 2–38 (SETSRTAFGGRRAVPPNNSNAAEDDLPTVELQGVVPR) is activation peptide. Catalysis depends on residues Cys315, His374, and Asp397. Ca(2+)-binding residues include Asn437, Asp439, Glu486, and Glu491. N-linked (GlcNAc...) asparagine glycosylation occurs at Asn614.

Belongs to the transglutaminase superfamily. Transglutaminase family. As to quaternary structure, tetramer of two A chains (F13A1) and two B (F13B) chains. Requires Ca(2+) as cofactor. The activation peptide is released by thrombin.

Its subcellular location is the cytoplasm. It is found in the secreted. The catalysed reaction is L-glutaminyl-[protein] + L-lysyl-[protein] = [protein]-L-lysyl-N(6)-5-L-glutamyl-[protein] + NH4(+). In terms of biological role, factor XIII is activated by thrombin and calcium ion to a transglutaminase that catalyzes the formation of gamma-glutamyl-epsilon-lysine cross-links between fibrin chains, thus stabilizing the fibrin clot. Also cross-link alpha-2-plasmin inhibitor, or fibronectin, to the alpha chains of fibrin. The chain is Coagulation factor XIII A chain (F13A1) from Homo sapiens (Human).